A 365-amino-acid chain; its full sequence is UDP-N-acetylglucosamine--N-acetylmuramyl-(pentapeptide) pyrophosphoryl-undecaprenol N-acetylglucosamine transferase (365 aa).

UDP-N-acetyl-alpha-D-glucosamine contacts are provided by residues 17–19, asparagine 129, arginine 167, serine 194, isoleucine 250, 269–274, and glutamine 295; these read TGG and ALTVSE.

The protein belongs to the glycosyltransferase 28 family. MurG subfamily.

It localises to the cell inner membrane. It catalyses the reaction di-trans,octa-cis-undecaprenyl diphospho-N-acetyl-alpha-D-muramoyl-L-alanyl-D-glutamyl-meso-2,6-diaminopimeloyl-D-alanyl-D-alanine + UDP-N-acetyl-alpha-D-glucosamine = di-trans,octa-cis-undecaprenyl diphospho-[N-acetyl-alpha-D-glucosaminyl-(1-&gt;4)]-N-acetyl-alpha-D-muramoyl-L-alanyl-D-glutamyl-meso-2,6-diaminopimeloyl-D-alanyl-D-alanine + UDP + H(+). It participates in cell wall biogenesis; peptidoglycan biosynthesis. Its function is as follows. Cell wall formation. Catalyzes the transfer of a GlcNAc subunit on undecaprenyl-pyrophosphoryl-MurNAc-pentapeptide (lipid intermediate I) to form undecaprenyl-pyrophosphoryl-MurNAc-(pentapeptide)GlcNAc (lipid intermediate II). The protein is UDP-N-acetylglucosamine--N-acetylmuramyl-(pentapeptide) pyrophosphoryl-undecaprenol N-acetylglucosamine transferase of Shewanella pealeana (strain ATCC 700345 / ANG-SQ1).